The sequence spans 429 residues: MPIIEQVGAREILDSRGNPTVEVEVGLLDGTVARAAVPSGASTGEHEAVELRDGGSRYLGKGVEKAVEAVLDEIAPAVIGLGADEQRLVDQALLDLDGTPDKSRLGANAILGVSLAVAKAAAQSAELPLFRYLGGPNAHILPVPMMNIINGGAHADTGVDVQEFMIAPIGAPSFKEALRWGAEVYHSLKSVLKKQGLSTGLGDEGGFAPDLPGTKAALDLIGTAIEGAGLKIGSDVALALDVAATEFYTDGTGYAFEKETRTAEQMAQFYEQLIGAYPLVSIEDPLSEDDWDGWVALTSAIGDRVQLVGDDLFVTNPERLEDGIERGAGNALLVKVNQIGTLTETLDAVSLAHHAGYKTMMSHRSGETEDTTIADLAVAVGSGQIKTGAPARSERVAKYNQLLRIEEELGDAARYAGDLAFPRFGVESK.

Gln-162 serves as a coordination point for (2R)-2-phosphoglycerate. The active-site Proton donor is the Glu-204. Mg(2+) is bound by residues Asp-241, Glu-283, and Asp-310. Residues Lys-335, Arg-364, Ser-365, and Lys-386 each contribute to the (2R)-2-phosphoglycerate site. Lys-335 serves as the catalytic Proton acceptor.

It belongs to the enolase family. The cofactor is Mg(2+).

The protein localises to the cytoplasm. It localises to the secreted. Its subcellular location is the cell surface. It carries out the reaction (2R)-2-phosphoglycerate = phosphoenolpyruvate + H2O. The protein operates within carbohydrate degradation; glycolysis; pyruvate from D-glyceraldehyde 3-phosphate: step 4/5. Its function is as follows. Catalyzes the reversible conversion of 2-phosphoglycerate (2-PG) into phosphoenolpyruvate (PEP). It is essential for the degradation of carbohydrates via glycolysis. This is Enolase from Mycolicibacterium gilvum (strain PYR-GCK) (Mycobacterium gilvum (strain PYR-GCK)).